A 554-amino-acid polypeptide reads, in one-letter code: Hydroxylamine reductase (554 aa).

Residues cysteine 3, cysteine 6, cysteine 18, and cysteine 25 each coordinate [2Fe-2S] cluster. Hybrid [4Fe-2O-2S] cluster-binding residues include histidine 252, glutamate 276, cysteine 320, cysteine 408, cysteine 436, cysteine 461, glutamate 495, and lysine 497. Cysteine 408 is modified (cysteine persulfide).

Belongs to the HCP family. [2Fe-2S] cluster is required as a cofactor. Hybrid [4Fe-2O-2S] cluster serves as cofactor.

It localises to the cytoplasm. The enzyme catalyses A + NH4(+) + H2O = hydroxylamine + AH2 + H(+). Functionally, catalyzes the reduction of hydroxylamine to form NH(3) and H(2)O. The sequence is that of Hydroxylamine reductase from Shewanella sp. (strain MR-4).